Here is a 343-residue protein sequence, read N- to C-terminus: MCKMYKVVETDASPGQRSVLQLVKDLLILSRFHKYNPWLAVFSGGVSLPILIGNSHPLTSGVSVWATLLAGANQIATHPASISADHIVKQTLLCLICGYIFCGAGMVWNDWIDRNIDKNVARTKNRPLAAGRVTATEGFIWMMVHVAAMIPVTISTILYPFGKRQLCRRLYIYPQYFLGFSLAWPGAIGWMAIKGRQIPFTQSISESLPLSITVFTWTLYLNTAYSYQDVVDDSKMNVNSAYVAAGSRIHMFLVILAGLVLGSLYLQLRAQNSGWLWASWMCVWALSFVHQLLRFDAKKPESGGPLHKENFALGVWTIVACAAELGLSSGMADQFFSNRVFRR.

Transmembrane regions (helical) follow at residues 38–58, 62–82, 92–112, 138–158, 170–190, 241–261, 273–293, and 311–331; these read WLAVFSGGVSLPILIGNSHPL, VSVWATLLAGANQIATHPASI, LLCLICGYIFCGAGMVWNDWI, GFIWMMVHVAAMIPVTISTIL, LYIYPQYFLGFSLAWPGAIGW, AYVAAGSRIHMFLVILAGLVL, SGWLWASWMCVWALSFVHQLL, and FALGVWTIVACAAELGLSSGM.

Belongs to the UbiA prenyltransferase family. Mg(2+) is required as a cofactor.

It localises to the membrane. The enzyme catalyses triacetate lactone + (2E,6E,10E)-geranylgeranyl diphosphate = (2E,6E,10E)-geranylgeranyl-triacetate lactone + diphosphate. It participates in secondary metabolite biosynthesis; terpenoid biosynthesis. Its function is as follows. Polyprenyl transferase; part of the gene cluster that mediates the biosynthesis of meroterpenoids called sartorypyrones. Within the pathway, spyF catalyzes the prenylation of triacetic acid lactone (TAL) to produce geranylgeranyl-triacetate lactone. The biosynthesis of sartorypyrones begins with the production of triacetic acid lactone (TAL) by the NR-PKS spyA using one molecule of acetyl-CoA and two molecules of malonyl-CoA. The prenyltransferase spyF then conjugates geranylgeranyl pyrophosphate (GGPP) to TAL to form geranylgeranyl-triacetate lactone, for which the pathway-specific geranylgeranyl pyrophosphate synthase (GGPS) spyE is required to provide GGPP. Subsequently, geranylgeranyl-triacetate lactone is epoxidized at the terminal olein by the FAD-dependent monooxygenase spyC, followed by cyclization of the terpenoid component catalyzed by the terpene cyclase spyD to produce both the bicyclic sartorypyrone F and the monocyclic sartorypyrone D. Finally, the last step of the biosynthesis involves the acetylation of the meroterpenoids sartorypyrones D and F by the acetyltransferase SpyB to produce sartorypyrones A and G, respectively. This chain is Polyprenyl transferase spyF, found in Aspergillus fumigatus (strain ATCC MYA-4609 / CBS 101355 / FGSC A1100 / Af293) (Neosartorya fumigata).